Here is a 1167-residue protein sequence, read N- to C-terminus: Pesticidal crystal protein Cry21Aa (1167 aa).

This sequence belongs to the delta endotoxin family.

In terms of biological role, endotoxin with nematicidal activity. This Bacillus thuringiensis protein is Pesticidal crystal protein Cry21Aa (cry21Aa).